Here is a 369-residue protein sequence, read N- to C-terminus: Septin-5 (369 aa).

At threonine 13 the chain carries Phosphothreonine. Positions 41 to 314 (KGFDFTLMVA…ENYRAHCIQQ (274 aa)) constitute a Septin-type G domain. The tract at residues 51 to 58 (GESGLGKS) is G1 motif. GTP contacts are provided by residues 51–58 (GESGLGKS), threonine 85, and glycine 111. The G3 motif stretch occupies residues 108-111 (DTPG). An Omega-N-methylarginine modification is found at arginine 168. Residues 189 to 192 (AKAD) form a G4 motif region. 190–198 (KADCLVPSE) contacts GTP. Position 225 is a phosphoserine (serine 225). GTP is bound by residues glycine 248 and arginine 263. Position 327 is a phosphoserine (serine 327). Threonine 336 carries the post-translational modification Phosphothreonine. Positions 338–369 (DAETEKLIRMKDEELRRMQEMLQKMKQQMQDQ) form a coiled coil.

Belongs to the TRAFAC class TrmE-Era-EngA-EngB-Septin-like GTPase superfamily. Septin GTPase family. As to quaternary structure, septins polymerize into heterooligomeric protein complexes that form filaments, and can associate with cellular membranes, actin filaments and microtubules. GTPase activity is required for filament formation. Interacts with SEPTIN2 and SEPTIN5. Interaction with SEPTIN4 not detected. In platelets, associated with a complex containing STX4. Interacts with PRKN; this interaction leads to SEPTIN5 ubiquitination and degradation. Interacts with DYRK1A. Interacts with STX1A; in the cerebellar cortex. In terms of processing, phosphorylated by DYRK1A.

It is found in the cytoplasm. The protein localises to the cytoskeleton. Its function is as follows. Filament-forming cytoskeletal GTPase. Involved in cytokinesis (Potential). May play a role in platelet secretion. The chain is Septin-5 from Mus musculus (Mouse).